A 650-amino-acid polypeptide reads, in one-letter code: Secretin OutD (650 aa).

The N-terminal stretch at 1-18 is a signal peptide; the sequence is MLLLSGSVLLMASSLAWS. Residues 20-115 form an N0 region; it reads EFSASFKGTD…LATDRQPGIG (96 aa). Residues 117 to 181 form an N1 region; the sequence is EVVTRVVPVN…TIVERVDQTG (65 aa). An N2 region spans residues 182–255; sequence DRNVTTIPLS…MVKQLDRQQA (74 aa). The tract at residues 258–330 is N3; sequence GNTKVIYLKY…DLEQVIAQLD (73 aa). The secretin stretch occupies residues 335 to 585; that stretch reads QVLVEAIIAE…LFIRPSIIRD (251 aa). The interval 587 to 650 is s domain; the sequence is SQFQSASASK…IVAFYPAGGK (64 aa).

Belongs to the bacterial secretin family. GSP D subfamily. In terms of assembly, forms a cylindrical channel with 15 subunits.

It localises to the cell outer membrane. Functionally, involved in a type II secretion system (T2SS, formerly general secretion pathway, GSP) for the export of proteins. Required for the translocation of the multiple pectic enzymes. This subunit forms the outer membrane channel. The polypeptide is Secretin OutD (outD) (Pectobacterium carotovorum subsp. carotovorum (Erwinia carotovora subsp. carotovora)).